The sequence spans 402 residues: 4-hydroxy-3-methylbut-2-enyl diphosphate reductase (402 aa).

Cysteine 66 serves as a coordination point for [4Fe-4S] cluster. Histidine 96 is a binding site for (2E)-4-hydroxy-3-methylbut-2-enyl diphosphate. A dimethylallyl diphosphate-binding site is contributed by histidine 96. Residue histidine 96 coordinates isopentenyl diphosphate. Cysteine 157 contributes to the [4Fe-4S] cluster binding site. Histidine 185 provides a ligand contact to (2E)-4-hydroxy-3-methylbut-2-enyl diphosphate. Dimethylallyl diphosphate is bound at residue histidine 185. An isopentenyl diphosphate-binding site is contributed by histidine 185. Glutamate 187 (proton donor) is an active-site residue. Residue threonine 250 participates in (2E)-4-hydroxy-3-methylbut-2-enyl diphosphate binding. Cysteine 288 contacts [4Fe-4S] cluster. (2E)-4-hydroxy-3-methylbut-2-enyl diphosphate is bound by residues serine 317, serine 318, asparagine 319, and serine 379. The dimethylallyl diphosphate site is built by serine 317, serine 318, asparagine 319, and serine 379. Residues serine 317, serine 318, asparagine 319, and serine 379 each coordinate isopentenyl diphosphate.

It belongs to the IspH family. It depends on [4Fe-4S] cluster as a cofactor.

The enzyme catalyses isopentenyl diphosphate + 2 oxidized [2Fe-2S]-[ferredoxin] + H2O = (2E)-4-hydroxy-3-methylbut-2-enyl diphosphate + 2 reduced [2Fe-2S]-[ferredoxin] + 2 H(+). It carries out the reaction dimethylallyl diphosphate + 2 oxidized [2Fe-2S]-[ferredoxin] + H2O = (2E)-4-hydroxy-3-methylbut-2-enyl diphosphate + 2 reduced [2Fe-2S]-[ferredoxin] + 2 H(+). It functions in the pathway isoprenoid biosynthesis; dimethylallyl diphosphate biosynthesis; dimethylallyl diphosphate from (2E)-4-hydroxy-3-methylbutenyl diphosphate: step 1/1. Its pathway is isoprenoid biosynthesis; isopentenyl diphosphate biosynthesis via DXP pathway; isopentenyl diphosphate from 1-deoxy-D-xylulose 5-phosphate: step 6/6. Functionally, catalyzes the conversion of 1-hydroxy-2-methyl-2-(E)-butenyl 4-diphosphate (HMBPP) into a mixture of isopentenyl diphosphate (IPP) and dimethylallyl diphosphate (DMAPP). Acts in the terminal step of the DOXP/MEP pathway for isoprenoid precursor biosynthesis. This is 4-hydroxy-3-methylbut-2-enyl diphosphate reductase from Microcystis aeruginosa (strain NIES-843 / IAM M-2473).